A 329-amino-acid chain; its full sequence is GMP reductase (329 aa).

Cys-178 serves as the catalytic Thioimidate intermediate. Residue 207–230 coordinates NADP(+); the sequence is VIADGGIRTHGDIAKSIRMGATMV.

It belongs to the IMPDH/GMPR family. GuaC type 2 subfamily.

It catalyses the reaction IMP + NH4(+) + NADP(+) = GMP + NADPH + 2 H(+). Its function is as follows. Catalyzes the irreversible NADPH-dependent deamination of GMP to IMP. It functions in the conversion of nucleobase, nucleoside and nucleotide derivatives of G to A nucleotides, and in maintaining the intracellular balance of A and G nucleotides. The sequence is that of GMP reductase from Lactococcus lactis subsp. lactis (strain IL1403) (Streptococcus lactis).